The following is a 64-amino-acid chain: Small ribosomal subunit protein bS21 (64 aa).

This sequence belongs to the bacterial ribosomal protein bS21 family.

The sequence is that of Small ribosomal subunit protein bS21 from Flavobacterium johnsoniae (strain ATCC 17061 / DSM 2064 / JCM 8514 / BCRC 14874 / CCUG 350202 / NBRC 14942 / NCIMB 11054 / UW101) (Cytophaga johnsonae).